A 283-amino-acid polypeptide reads, in one-letter code: Phosphatidylglycerol--prolipoprotein diacylglyceryl transferase (283 aa).

A run of 4 helical transmembrane segments spans residues L17 to G37, F56 to Y76, W92 to F112, and G117 to S137. R139 is a binding site for a 1,2-diacyl-sn-glycero-3-phospho-(1'-sn-glycerol). The next 3 membrane-spanning stretches (helical) occupy residues P194–F214, G222–A242, and G255–V275.

The protein belongs to the Lgt family.

The protein resides in the cell inner membrane. The enzyme catalyses L-cysteinyl-[prolipoprotein] + a 1,2-diacyl-sn-glycero-3-phospho-(1'-sn-glycerol) = an S-1,2-diacyl-sn-glyceryl-L-cysteinyl-[prolipoprotein] + sn-glycerol 1-phosphate + H(+). It functions in the pathway protein modification; lipoprotein biosynthesis (diacylglyceryl transfer). Catalyzes the transfer of the diacylglyceryl group from phosphatidylglycerol to the sulfhydryl group of the N-terminal cysteine of a prolipoprotein, the first step in the formation of mature lipoproteins. The polypeptide is Phosphatidylglycerol--prolipoprotein diacylglyceryl transferase (Neisseria meningitidis serogroup C / serotype 2a (strain ATCC 700532 / DSM 15464 / FAM18)).